The following is a 160-amino-acid chain: Non-secretory ribonuclease (160 aa).

The first 27 residues, 1–27 (MVPKLFTSQICLLLLLGLMGVEGSLHA), serve as a signal peptide directing secretion. C-linked (Man) tryptophan glycosylation is present at tryptophan 34. Histidine 42 serves as the catalytic Proton acceptor. Asparagine 44 is a glycosylation site (N-linked (GlcNAc...) asparagine). 4 cysteine pairs are disulfide-bonded: cysteine 50/cysteine 110, cysteine 64/cysteine 122, cysteine 82/cysteine 137, and cysteine 89/cysteine 98. Tyrosine 60 carries the post-translational modification 3'-nitrotyrosine. Substrate is bound at residue 65–69 (KNQNT). 3 N-linked (GlcNAc...) asparagine glycosylation sites follow: asparagine 92, asparagine 111, and asparagine 138. The active-site Proton donor is histidine 155.

The protein belongs to the pancreatic ribonuclease family. Interacts with and forms a tight 1:1 complex with RNH1. Dimerization of two such complexes may occur.

It localises to the lysosome. It is found in the cytoplasmic granule. The catalysed reaction is an [RNA] containing cytidine + H2O = an [RNA]-3'-cytidine-3'-phosphate + a 5'-hydroxy-ribonucleotide-3'-[RNA].. The enzyme catalyses an [RNA] containing uridine + H2O = an [RNA]-3'-uridine-3'-phosphate + a 5'-hydroxy-ribonucleotide-3'-[RNA].. In terms of biological role, this is a non-secretory ribonuclease. It is a pyrimidine specific nuclease with a slight preference for U. Cytotoxin and helminthotoxin. Possesses a wide variety of biological activities. In Macaca fascicularis (Crab-eating macaque), this protein is Non-secretory ribonuclease (RNASE2).